The sequence spans 315 residues: Methionyl-tRNA formyltransferase (315 aa).

(6S)-5,6,7,8-tetrahydrofolate is bound at residue 117–120 (SLLP).

This sequence belongs to the Fmt family.

It catalyses the reaction L-methionyl-tRNA(fMet) + (6R)-10-formyltetrahydrofolate = N-formyl-L-methionyl-tRNA(fMet) + (6S)-5,6,7,8-tetrahydrofolate + H(+). Functionally, attaches a formyl group to the free amino group of methionyl-tRNA(fMet). The formyl group appears to play a dual role in the initiator identity of N-formylmethionyl-tRNA by promoting its recognition by IF2 and preventing the misappropriation of this tRNA by the elongation apparatus. This is Methionyl-tRNA formyltransferase from Methylibium petroleiphilum (strain ATCC BAA-1232 / LMG 22953 / PM1).